The chain runs to 333 residues: Nucleoid-associated protein HAPS_0704 (333 aa).

This sequence belongs to the YejK family.

It is found in the cytoplasm. The protein resides in the nucleoid. The polypeptide is Nucleoid-associated protein HAPS_0704 (Glaesserella parasuis serovar 5 (strain SH0165) (Haemophilus parasuis)).